Consider the following 475-residue polypeptide: Beta-amyrin 16-alpha-hydroxylase CYP87D16 (475 aa).

A helical transmembrane segment spans residues 3–23 (VVGLIGVAVVTILITQYVYKW). Residue Cys423 coordinates heme.

This sequence belongs to the cytochrome P450 family. Heme is required as a cofactor.

The protein resides in the membrane. It catalyses the reaction beta-amyrin + reduced [NADPH--hemoprotein reductase] + O2 = 16alpha-hydroxy-beta-amyrin + oxidized [NADPH--hemoprotein reductase] + H2O + H(+). In terms of biological role, involved in the biosynthetic pathway of maesasaponins, which are oleanane-type saponins with diverse biological activities. Catalyzes the C-16alpha oxidation of beta-amyrin to form 16alpha-hydroxy-beta-amyrin. The protein is Beta-amyrin 16-alpha-hydroxylase CYP87D16 of Maesa lanceolata (False assegai).